The chain runs to 184 residues: NADH dehydrogenase [ubiquinone] 1 alpha subcomplex assembly factor 3 (184 aa).

It belongs to the NDUFAF3 family. As to quaternary structure, interacts with NDUFAF4, NDUFS2 and NDUFS3.

It localises to the nucleus. The protein localises to the mitochondrion inner membrane. Essential factor for the assembly of mitochondrial NADH:ubiquinone oxidoreductase complex (complex I). The sequence is that of NADH dehydrogenase [ubiquinone] 1 alpha subcomplex assembly factor 3 (NDUFAF3) from Homo sapiens (Human).